The chain runs to 636 residues: Biosynthetic arginine decarboxylase (636 aa).

The residue at position 101 (Lys-101) is an N6-(pyridoxal phosphate)lysine. Substrate is bound at residue Phe-286 to Tyr-296.

This sequence belongs to the Orn/Lys/Arg decarboxylase class-II family. SpeA subfamily. Mg(2+) is required as a cofactor. The cofactor is pyridoxal 5'-phosphate.

It carries out the reaction L-arginine + H(+) = agmatine + CO2. Its pathway is amine and polyamine biosynthesis; agmatine biosynthesis; agmatine from L-arginine: step 1/1. In terms of biological role, catalyzes the biosynthesis of agmatine from arginine. This chain is Biosynthetic arginine decarboxylase, found in Shewanella frigidimarina (strain NCIMB 400).